The primary structure comprises 249 residues: Mediator of RNA polymerase II transcription subunit 8 (249 aa).

Residues 154-200 adopt a coiled-coil conformation; the sequence is LEEREMGIQNVVTGLRRQLEDEDEEASESEEEVEEEEMEVVGVRRRS. Residues 170–249 are disordered; that stretch reads RQLEDEDEEA…MTTGIPPTQR (80 aa). Over residues 173 to 192 the composition is skewed to acidic residues; sequence EDEDEEASESEEEVEEEEME. Positions 211–232 are enriched in low complexity; the sequence is AAPAPGSRQQQQQQKAAGPAVP.

The protein belongs to the Mediator complex subunit 8 family. In terms of assembly, component of the Mediator complex.

It is found in the nucleus. Its function is as follows. Component of the Mediator complex, a coactivator involved in the regulated transcription of nearly all RNA polymerase II-dependent genes. Mediator functions as a bridge to convey information from gene-specific regulatory proteins to the basal RNA polymerase II transcription machinery. Mediator is recruited to promoters by direct interactions with regulatory proteins and serves as a scaffold for the assembly of a functional preinitiation complex with RNA polymerase II and the general transcription factors. The protein is Mediator of RNA polymerase II transcription subunit 8 (med8) of Aspergillus fumigatus (strain ATCC MYA-4609 / CBS 101355 / FGSC A1100 / Af293) (Neosartorya fumigata).